The sequence spans 253 residues: 5-oxoprolinase subunit A (253 aa).

It belongs to the LamB/PxpA family. As to quaternary structure, forms a complex composed of PxpA, PxpB and PxpC.

It catalyses the reaction 5-oxo-L-proline + ATP + 2 H2O = L-glutamate + ADP + phosphate + H(+). Catalyzes the cleavage of 5-oxoproline to form L-glutamate coupled to the hydrolysis of ATP to ADP and inorganic phosphate. This chain is 5-oxoprolinase subunit A, found in Bacillus cereus (strain ZK / E33L).